The following is a 449-amino-acid chain: Phosphoglucosamine mutase (449 aa).

The Phosphoserine intermediate role is filled by S101. Mg(2+)-binding residues include S101, D242, D244, and D246. Phosphoserine is present on S101.

It belongs to the phosphohexose mutase family. Mg(2+) is required as a cofactor. Post-translationally, activated by phosphorylation.

The catalysed reaction is alpha-D-glucosamine 1-phosphate = D-glucosamine 6-phosphate. Its function is as follows. Catalyzes the conversion of glucosamine-6-phosphate to glucosamine-1-phosphate. In Methylocella silvestris (strain DSM 15510 / CIP 108128 / LMG 27833 / NCIMB 13906 / BL2), this protein is Phosphoglucosamine mutase.